A 170-amino-acid chain; its full sequence is Peptide methionine sulfoxide reductase MsrA (170 aa).

C14 is an active-site residue.

It belongs to the MsrA Met sulfoxide reductase family.

The catalysed reaction is L-methionyl-[protein] + [thioredoxin]-disulfide + H2O = L-methionyl-(S)-S-oxide-[protein] + [thioredoxin]-dithiol. The enzyme catalyses [thioredoxin]-disulfide + L-methionine + H2O = L-methionine (S)-S-oxide + [thioredoxin]-dithiol. Functionally, has an important function as a repair enzyme for proteins that have been inactivated by oxidation. Catalyzes the reversible oxidation-reduction of methionine sulfoxide in proteins to methionine. The polypeptide is Peptide methionine sulfoxide reductase MsrA (Streptomyces avermitilis (strain ATCC 31267 / DSM 46492 / JCM 5070 / NBRC 14893 / NCIMB 12804 / NRRL 8165 / MA-4680)).